Reading from the N-terminus, the 310-residue chain is 2-methoxy-6-polyprenyl-1,4-benzoquinol methylase, mitochondrial (310 aa).

The N-terminal 6 residues, 1 to 6 (MAHMRS), are a transit peptide targeting the mitochondrion. Residues threonine 99, aspartate 154, and 182 to 183 (DA) each bind S-adenosyl-L-methionine.

It belongs to the class I-like SAM-binding methyltransferase superfamily. MenG/UbiE family. In terms of assembly, component of a multi-subunit COQ enzyme complex, composed of at least coq3, coq4, coq5, coq6, coq7 and coq9.

Its subcellular location is the mitochondrion inner membrane. The enzyme catalyses a 2-methoxy-6-(all-trans-polyprenyl)benzene-1,4-diol + S-adenosyl-L-methionine = a 5-methoxy-2-methyl-3-(all-trans-polyprenyl)benzene-1,4-diol + S-adenosyl-L-homocysteine + H(+). It functions in the pathway cofactor biosynthesis; ubiquinone biosynthesis. Functionally, methyltransferase required for the conversion of 2-polyprenyl-6-methoxy-1,4-benzoquinol (DDMQH2) to 2-polyprenyl-3-methyl-6-methoxy-1,4-benzoquinol (DMQH2). In Xenopus laevis (African clawed frog), this protein is 2-methoxy-6-polyprenyl-1,4-benzoquinol methylase, mitochondrial.